A 267-amino-acid chain; its full sequence is Tryptophan synthase alpha chain (267 aa).

Active-site proton acceptor residues include glutamate 49 and aspartate 60.

The protein belongs to the TrpA family. As to quaternary structure, tetramer of two alpha and two beta chains.

It carries out the reaction (1S,2R)-1-C-(indol-3-yl)glycerol 3-phosphate + L-serine = D-glyceraldehyde 3-phosphate + L-tryptophan + H2O. It functions in the pathway amino-acid biosynthesis; L-tryptophan biosynthesis; L-tryptophan from chorismate: step 5/5. Its function is as follows. The alpha subunit is responsible for the aldol cleavage of indoleglycerol phosphate to indole and glyceraldehyde 3-phosphate. This Acaryochloris marina (strain MBIC 11017) protein is Tryptophan synthase alpha chain.